Reading from the N-terminus, the 372-residue chain is tRNA-specific 2-thiouridylase MnmA (372 aa).

ATP contacts are provided by residues 11-18 (GMSGGVDS) and methionine 37. The interval 97-99 (NPD) is interaction with target base in tRNA. The active-site Nucleophile is the cysteine 102. A disulfide bridge connects residues cysteine 102 and cysteine 199. An ATP-binding site is contributed by glycine 126. The tract at residues 149 to 151 (KDQ) is interaction with tRNA. Cysteine 199 serves as the catalytic Cysteine persulfide intermediate. The interval 309–310 (RY) is interaction with tRNA.

It belongs to the MnmA/TRMU family.

Its subcellular location is the cytoplasm. It catalyses the reaction S-sulfanyl-L-cysteinyl-[protein] + uridine(34) in tRNA + AH2 + ATP = 2-thiouridine(34) in tRNA + L-cysteinyl-[protein] + A + AMP + diphosphate + H(+). Catalyzes the 2-thiolation of uridine at the wobble position (U34) of tRNA, leading to the formation of s(2)U34. The sequence is that of tRNA-specific 2-thiouridylase MnmA from Staphylococcus aureus (strain USA300).